A 364-amino-acid polypeptide reads, in one-letter code: Putative protein C31H2.4 (364 aa).

VOC domains lie at 6–134 (AIHH…LGEF) and 161–320 (LMDH…IFSK). His164, His248, and Glu331 together coordinate Fe cation.

The protein belongs to the 4HPPD family. Fe cation is required as a cofactor.

The sequence is that of Putative protein C31H2.4 from Caenorhabditis elegans.